Reading from the N-terminus, the 508-residue chain is Lysine-specific permease LysP (508 aa).

12 helical membrane-spanning segments follow: residues 43-63 (SMIALGGTIGTGLFLTSGDVI), 66-86 (AGPFGALTAYVLIGAMVYFLM), 112-132 (PAFGFALGWNYWLNWAITVAV), 144-164 (WLPDVPSWIFSLIALIIVFSI), 184-204 (ITVVVLFLIIGFLSIFGIMGG), 219-239 (FVGGLGSFTTGGGILGVLLVA), 270-290 (IFWRILVFYILSIFVMAAIIP), 314-334 (VGFSIAASIMNAVVLTSVVSA), 367-387 (IPFIALLATTAVALLTFLTSI), 393-413 (FTLLVSASGLTGFIAWIGIAI), 436-456 (AKLFPFGPILALIMTVLVTLG), and 467-487 (WVQGVVMYAAIPLFFILYLGY).

It belongs to the amino acid-polyamine-organocation (APC) superfamily. Amino acid transporter (AAT) (TC 2.A.3.1) family.

Its subcellular location is the cell membrane. The enzyme catalyses L-lysine(out) + H(+)(out) = L-lysine(in) + H(+)(in). Its function is as follows. Permease involved in lysine uptake. The polypeptide is Lysine-specific permease LysP (Lactococcus lactis subsp. cremoris (strain MG1363)).